The following is a 416-amino-acid chain: UDP-N-acetylglucosamine 1-carboxyvinyltransferase (416 aa).

22–23 (KN) lines the phosphoenolpyruvate pocket. R92 provides a ligand contact to UDP-N-acetyl-alpha-D-glucosamine. Residue C116 is the Proton donor of the active site. C116 is subject to 2-(S-cysteinyl)pyruvic acid O-phosphothioketal. UDP-N-acetyl-alpha-D-glucosamine is bound by residues 121-125 (RPVDQ), D304, and I326.

Belongs to the EPSP synthase family. MurA subfamily.

The protein resides in the cytoplasm. The catalysed reaction is phosphoenolpyruvate + UDP-N-acetyl-alpha-D-glucosamine = UDP-N-acetyl-3-O-(1-carboxyvinyl)-alpha-D-glucosamine + phosphate. The protein operates within cell wall biogenesis; peptidoglycan biosynthesis. Cell wall formation. Adds enolpyruvyl to UDP-N-acetylglucosamine. This is UDP-N-acetylglucosamine 1-carboxyvinyltransferase from Cupriavidus pinatubonensis (strain JMP 134 / LMG 1197) (Cupriavidus necator (strain JMP 134)).